The following is a 176-amino-acid chain: ATP-dependent protease subunit HslV (176 aa).

Thr6 is an active-site residue. Na(+) is bound by residues Ser161, Cys164, and Thr167.

The protein belongs to the peptidase T1B family. HslV subfamily. In terms of assembly, a double ring-shaped homohexamer of HslV is capped on each side by a ring-shaped HslU homohexamer. The assembly of the HslU/HslV complex is dependent on binding of ATP.

The protein localises to the cytoplasm. It carries out the reaction ATP-dependent cleavage of peptide bonds with broad specificity.. Its activity is regulated as follows. Allosterically activated by HslU binding. In terms of biological role, protease subunit of a proteasome-like degradation complex believed to be a general protein degrading machinery. In Aquifex aeolicus (strain VF5), this protein is ATP-dependent protease subunit HslV.